We begin with the raw amino-acid sequence, 293 residues long: MKISITAPAKINLSLDALYKREDGYHEVEMVMTTIDLADRLYLERLDEDKIVLDVKAHFIPEDRRNLIYQAALLLKKRFDVKMGVRITIDKHIPVSAGLAGGSSDAAAALKGLNVIWELGLSIEELAEISSEIGSDIAFCVYGGTALATGRGEKISALPNIPGCWIVLAKPSISVSTPTIYKELQVDNVEHPDTQKMIESIKNGDLDGIFAATGNVLESVTLEKNPQVKRIKDRMLAFGAEAALMSGSGPTVFALIKQYSRAKRVYNGLRGFCEEVYMVRPWSEGENDTNINY.

Residue Lys10 is part of the active site. 94–104 (PVSAGLAGGSS) contributes to the ATP binding site. Asp136 is a catalytic residue.

It belongs to the GHMP kinase family. IspE subfamily.

The enzyme catalyses 4-CDP-2-C-methyl-D-erythritol + ATP = 4-CDP-2-C-methyl-D-erythritol 2-phosphate + ADP + H(+). Its pathway is isoprenoid biosynthesis; isopentenyl diphosphate biosynthesis via DXP pathway; isopentenyl diphosphate from 1-deoxy-D-xylulose 5-phosphate: step 3/6. Functionally, catalyzes the phosphorylation of the position 2 hydroxy group of 4-diphosphocytidyl-2C-methyl-D-erythritol. The protein is 4-diphosphocytidyl-2-C-methyl-D-erythritol kinase of Listeria monocytogenes serovar 1/2a (strain ATCC BAA-679 / EGD-e).